Here is a 116-residue protein sequence, read N- to C-terminus: Spermadhesin Z13 (116 aa).

2 cysteine pairs are disulfide-bonded: Cys14–Cys35 and Cys58–Cys79. A CUB domain is found at 14-115; sequence CGDLYGEEYG…PDFFLIFRRV (102 aa).

Belongs to the spermadhesin family. Homodimer; disulfide-linked. Seminal plasma.

The protein localises to the secreted. In terms of biological role, may be involved in the fertilization process. This chain is Spermadhesin Z13, found in Bos taurus (Bovine).